A 166-amino-acid polypeptide reads, in one-letter code: Ribosome biogenesis regulatory protein homolog (166 aa).

Phosphoserine is present on residues S34 and S64. The tract at residues 144–166 (KEKKLTSKQVRNTSKKIKRSRRH) is disordered. Residues 156–166 (TSKKIKRSRRH) show a composition bias toward basic residues.

The protein belongs to the RRS1 family. Component of a hexameric 5S RNP precursor complex, composed of 5S RNA, rrs1, rpf2, rpl5a/rpl5b, rpl11a/rpl11b and syo1; this complex acts as a precursor for ribosome assembly. Interacts with sad1.

The protein localises to the nucleus. It localises to the nucleolus. Involved in ribosomal large subunit assembly. In Schizosaccharomyces pombe (strain 972 / ATCC 24843) (Fission yeast), this protein is Ribosome biogenesis regulatory protein homolog.